The following is a 285-amino-acid chain: CCR4-NOT transcription complex subunit 7 (285 aa).

The a divalent metal cation site is built by aspartate 40, glutamate 42, aspartate 161, aspartate 230, and glutamate 278.

This sequence belongs to the CAF1 family. Component of the CCR4-NOT complex; distinct complexes seem to exist that differ in the participation of probably mutually exclusive catalytic subunits; the complex contains two deadenylase subunits, CNOT6 or CNOT6L, and CNOT7 or CNOT8. In the complex, interacts directly with CNOT1. Interacts with AGO2. Interacts with TOB1; recruited by TOB1 to a ternary complex with CPEB3 which is required for mRNA deadenylation and decay. Interacts with BTG1. Interacts with BTG2. Interacts with NANOS2. Interacts with ZFP36, ZFP36L1 and ZFP36L2; these interactions are inhibited in response to phorbol 12-myristate 13-acetate (PMA) treatment in a p38 MAPK-dependent manner. Interacts with BTG4. Interacts with EIF4E; this interaction is increased by CNOT7 interaction with BTG4. Mn(2+) serves as cofactor. Requires Mg(2+) as cofactor. It depends on Co(2+) as a cofactor.

Its subcellular location is the nucleus. It localises to the cytoplasm. The protein resides in the P-body. It is found in the cytoplasmic ribonucleoprotein granule. The catalysed reaction is Exonucleolytic cleavage of poly(A) to 5'-AMP.. Functionally, has 3'-5' poly(A) exoribonuclease activity for synthetic poly(A) RNA substrate. Its function seems to be partially redundant with that of CNOT8. Catalytic component of the CCR4-NOT complex which is one of the major cellular mRNA deadenylases and is linked to various cellular processes including bulk mRNA degradation, miRNA-mediated repression, translational repression during translational initiation and general transcription regulation. During miRNA-mediated repression the complex also seems to act as translational repressor during translational initiation. Additional complex functions may be a consequence of its influence on mRNA expression. Required for miRNA-mediated mRNA deadenylation. Associates with members of the BTG family such as TOB1 and BTG2 and is required for their anti-proliferative activity. The sequence is that of CCR4-NOT transcription complex subunit 7 (CNOT7) from Bos taurus (Bovine).